The chain runs to 377 residues: Mitochondrial pyrimidine nucleotide transporter RIM2 (377 aa).

3 Solcar repeats span residues 50–163, 173–262, and 286–375; these read VKPW…TKDM, ETPM…MKRL, and KEWC…VIRL. The next 6 membrane-spanning stretches (helical) occupy residues 53–73, 131–151, 179–199, 238–258, 286–306, and 347–368; these read WVHFVAGGIGGMAGAVVTCPF, GFRSLFKGLGPNLVGVIPARS, LMAAATAGWATATATNPIWLI, GLSASYLGSVEGILQWLLYEQ, KEWCQRSGSAGLAKFVASIAT, and MYSGLTPHLMRTVPNSIIMFGT.

It belongs to the mitochondrial carrier (TC 2.A.29) family.

It localises to the mitochondrion inner membrane. It catalyses the reaction 5-methyl-UTP(out) + UTP(in) = 5-methyl-UTP(in) + UTP(out). In terms of biological role, mitochondrial transporter that imports/exports pyrimidine nucleotides into and from mitochondria. Selectively transports uridine, thymidine, and cytosine (deoxy)nucleoside di- and triphosphates by an antiport mechanism. Also transports, with lower efficiency, uridine, thymidine, and cytosine (deoxy)nucleoside monophosphates as well as guanosine (deoxy)nucleoside di- and triphosphate. May import (deoxy)nucleoside triphosphates in exchange for intramitochondrial (deoxy)nucleoside monophosphates, thus providing precursors necessary for de novo synthesis of mitochondrial DNA and RNA while exporting products of their catabolism. Mediates the transport of iron and other divalent metal ions like copper and zinc across the mitochondrial inner membrane in a pyrimidine nucleotide-dependent fashion. Catalyzes the co-import of pyrimidine nucleotides and divalent metal ions including ferrous iron. Participates in mitochondrial genome maintenance, regulation of mitochondrial membrane potential and mitochondrial respiration. In Saccharomyces cerevisiae (strain ATCC 204508 / S288c) (Baker's yeast), this protein is Mitochondrial pyrimidine nucleotide transporter RIM2 (RIM2).